The chain runs to 476 residues: ATP synthase subunit beta (476 aa).

G154–T161 lines the ATP pocket.

The protein belongs to the ATPase alpha/beta chains family. As to quaternary structure, F-type ATPases have 2 components, CF(1) - the catalytic core - and CF(0) - the membrane proton channel. CF(1) has five subunits: alpha(3), beta(3), gamma(1), delta(1), epsilon(1). CF(0) has three main subunits: a(1), b(2) and c(9-12). The alpha and beta chains form an alternating ring which encloses part of the gamma chain. CF(1) is attached to CF(0) by a central stalk formed by the gamma and epsilon chains, while a peripheral stalk is formed by the delta and b chains.

The protein localises to the cell inner membrane. The catalysed reaction is ATP + H2O + 4 H(+)(in) = ADP + phosphate + 5 H(+)(out). Functionally, produces ATP from ADP in the presence of a proton gradient across the membrane. The catalytic sites are hosted primarily by the beta subunits. The sequence is that of ATP synthase subunit beta from Nitrobacter hamburgensis (strain DSM 10229 / NCIMB 13809 / X14).